A 251-amino-acid polypeptide reads, in one-letter code: Triosephosphate isomerase (251 aa).

Positions 12 and 14 each coordinate substrate. The active-site Electrophile is His-96. Glu-168 serves as the catalytic Proton acceptor.

This sequence belongs to the triosephosphate isomerase family. As to quaternary structure, homodimer.

It localises to the cytoplasm. The protein resides in the glycosome. It catalyses the reaction D-glyceraldehyde 3-phosphate = dihydroxyacetone phosphate. It functions in the pathway carbohydrate biosynthesis; gluconeogenesis. The protein operates within carbohydrate degradation; glycolysis; D-glyceraldehyde 3-phosphate from glycerone phosphate: step 1/1. This Leishmania mexicana protein is Triosephosphate isomerase.